The sequence spans 162 residues: uncharacterized protein (162 aa).

Residues 6–71 enclose the HTH asnC-type domain; the sequence is LDDLDRAILK…PIKPRKLALV (66 aa). A DNA-binding region (H-T-H motif) is located at residues 25 to 44; that stretch reads IAEISNQLKKPESTVHFRIK.

This is an uncharacterized protein from Pyrococcus abyssi (strain GE5 / Orsay).